The sequence spans 361 residues: Chorismate synthase (361 aa).

NADP(+) contacts are provided by R48 and R54. Residues 125-127 (RSS), 238-239 (NA), G278, 293-297 (KPTSS), and R319 each bind FMN.

It belongs to the chorismate synthase family. Homotetramer. FMNH2 is required as a cofactor.

It catalyses the reaction 5-O-(1-carboxyvinyl)-3-phosphoshikimate = chorismate + phosphate. The protein operates within metabolic intermediate biosynthesis; chorismate biosynthesis; chorismate from D-erythrose 4-phosphate and phosphoenolpyruvate: step 7/7. In terms of biological role, catalyzes the anti-1,4-elimination of the C-3 phosphate and the C-6 proR hydrogen from 5-enolpyruvylshikimate-3-phosphate (EPSP) to yield chorismate, which is the branch point compound that serves as the starting substrate for the three terminal pathways of aromatic amino acid biosynthesis. This reaction introduces a second double bond into the aromatic ring system. This is Chorismate synthase from Enterobacter sp. (strain 638).